The primary structure comprises 873 residues: Rho GTPase-activating protein gacJJ (873 aa).

The tract at residues Asp-64–Thr-147 is disordered. Over residues Pro-66–Ser-91 the composition is skewed to low complexity. Positions Ile-103–Asn-112 are enriched in gly residues. Residues Gly-113–Asn-144 show a composition bias toward low complexity. One can recognise a PH domain in the interval Asn-301–Ser-402. The 194-residue stretch at Val-428–Phe-621 folds into the Rho-GAP domain. Residues Glu-628 to His-694 enclose the SH3 domain. Positions Met-715 to Thr-761 form a coiled coil.

It is found in the cytoplasm. Functionally, rho GTPase-activating protein involved in the signal transduction pathway. The polypeptide is Rho GTPase-activating protein gacJJ (gacJJ) (Dictyostelium discoideum (Social amoeba)).